Reading from the N-terminus, the 546-residue chain is Chaperonin GroEL (546 aa).

ATP-binding positions include 29–32 (TMGP), lysine 50, 86–90 (DGTTT), glycine 414, and aspartate 492.

The protein belongs to the chaperonin (HSP60) family. As to quaternary structure, forms a cylinder of 14 subunits composed of two heptameric rings stacked back-to-back. Interacts with the co-chaperonin GroES.

The protein localises to the cytoplasm. It catalyses the reaction ATP + H2O + a folded polypeptide = ADP + phosphate + an unfolded polypeptide.. In terms of biological role, together with its co-chaperonin GroES, plays an essential role in assisting protein folding. The GroEL-GroES system forms a nano-cage that allows encapsulation of the non-native substrate proteins and provides a physical environment optimized to promote and accelerate protein folding. This chain is Chaperonin GroEL, found in Helicobacter pylori (strain J99 / ATCC 700824) (Campylobacter pylori J99).